The sequence spans 406 residues: Luteothin monooxygenase (406 aa).

H98, R102, R296, G350, H353, and C355 together coordinate heme b.

It belongs to the cytochrome P450 family. Monomer. Requires heme b as cofactor.

It carries out the reaction luteothin + 4 reduced [2Fe-2S]-[ferredoxin] + 2 O2 + 4 H(+) = aureothin + 4 oxidized [2Fe-2S]-[ferredoxin] + 3 H2O. It participates in antibiotic biosynthesis. The protein operates within polyketide biosynthesis. Bifunctional cytochrome P450 protein involved in the biosynthesis of the antibiotic aureothin, a nitroaryl polyketide metabolite with antifungal, cytotoxic and insecticidal activities. Catalyzes the hydroxylation of luteothin (also called deoxyaureothin), leading to the formation of the intermediate (7R)-7-hydroxydeoxyaureothin, followed by the formation of the aureothin tetrahydrofuran ring, the final step in the biosynthesis of aureothin. This Streptomyces thioluteus protein is Luteothin monooxygenase.